The chain runs to 508 residues: Gasdermin-C (508 aa).

Residues 1 to 257 (MPSMLERISK…VGYCAARSEG (257 aa)) form a triggers pyroptosis region.

It belongs to the gasdermin family. As to quaternary structure, homooligomer; homooligomeric ring-shaped pore complex containing 27-28 subunits when inserted in the membrane. In terms of processing, cleavage by CASP8 relieves autoinhibition by releasing the N-terminal moiety (Gasdermin-C, N-terminal) that initiates pyroptosis. The cleavage site is unclear. According to a publication, it takes place after Asp-240 in response to alpha-ketoglutarate. Another paper reports cleavage by CASP8 after Asp-365. Palmitoylated. In terms of tissue distribution, expressed mainly in trachea and spleen. In the esophagus, expressed in differentiating cells and probably in differentiated cells. Also detected in gastric epithelium.

The protein localises to the cytoplasm. It is found in the cytosol. Its subcellular location is the cell membrane. Its activity is regulated as follows. The full-length protein before cleavage is inactive: intramolecular interactions between N- and C-terminal domains mediate autoinhibition in the absence of activation signal. The intrinsic pyroptosis-inducing activity is carried by the released N-terminal moiety (Gasdermin-C, N-terminal) following cleavage by caspase CASP8. Its function is as follows. This form constitutes the precursor of the pore-forming protein: upon cleavage, the released N-terminal moiety (Gasdermin-C, N-terminal) binds to membranes and forms pores, triggering pyroptosis. Functionally, pore-forming protein that causes membrane permeabilization and pyroptosis. Produced by the cleavage of gasdermin-C by caspase CASP8 in response to death signals. After cleavage, moves to the plasma membrane where it strongly binds to membrane inner leaflet lipids. Homooligomerizes within the membrane and forms pores of 10-15 nanometers (nm) of inner diameter, triggering pyroptosis. This is Gasdermin-C from Homo sapiens (Human).